Here is a 345-residue protein sequence, read N- to C-terminus: N-acetyl-gamma-glutamyl-phosphate reductase (345 aa).

C149 is a catalytic residue.

Belongs to the NAGSA dehydrogenase family. Type 1 subfamily.

The protein resides in the cytoplasm. It catalyses the reaction N-acetyl-L-glutamate 5-semialdehyde + phosphate + NADP(+) = N-acetyl-L-glutamyl 5-phosphate + NADPH + H(+). Its pathway is amino-acid biosynthesis; L-arginine biosynthesis; N(2)-acetyl-L-ornithine from L-glutamate: step 3/4. Its function is as follows. Catalyzes the NADPH-dependent reduction of N-acetyl-5-glutamyl phosphate to yield N-acetyl-L-glutamate 5-semialdehyde. The polypeptide is N-acetyl-gamma-glutamyl-phosphate reductase (Bacillus cereus (strain 03BB102)).